Here is an 877-residue protein sequence, read N- to C-terminus: Mediator of RNA polymerase II transcription subunit 16 (877 aa).

9 WD repeats span residues 21–71, 72–119, 120–165, 166–203, 204–257, 258–334, 335–415, 416–460, and 461–495; these read WEKW…EHPW, DLHS…NSWE, SSVG…VKFS, PSLT…LTST, ESLC…RIDT, EILP…DKQP, TILK…RPVD, EPAM…LSPS, and MGHP…LLHV. The interval 848–877 is disordered; the sequence is PAFVQLGPQSTHHSPRTPRSLDHLHPEDRP. Residues 866–877 show a composition bias toward basic and acidic residues; sequence RSLDHLHPEDRP.

It belongs to the Mediator complex subunit 16 family. Component of the Mediator complex, which is composed of MED1, MED4, MED6, MED7, MED8, MED9, MED10, MED11, MED12, MED13, MED13L, MED14, MED15, MED16, MED17, MED18, MED19, MED20, MED21, MED22, MED23, MED24, MED25, MED26, MED27, MED29, MED30, MED31, CCNC, CDK8 and CDC2L6/CDK11. The MED12, MED13, CCNC and CDK8 subunits form a distinct module termed the CDK8 module. Mediator containing the CDK8 module is less active than Mediator lacking this module in supporting transcriptional activation. Individual preparations of the Mediator complex lacking one or more distinct subunits have been variously termed ARC, CRSP, DRIP, PC2, SMCC and TRAP.

It is found in the nucleus. Its function is as follows. Component of the Mediator complex, a coactivator involved in the regulated transcription of nearly all RNA polymerase II-dependent genes. Mediator functions as a bridge to convey information from gene-specific regulatory proteins to the basal RNA polymerase II transcription machinery. Mediator is recruited to promoters by direct interactions with regulatory proteins and serves as a scaffold for the assembly of a functional preinitiation complex with RNA polymerase II and the general transcription factors. This chain is Mediator of RNA polymerase II transcription subunit 16 (MED16), found in Homo sapiens (Human).